Here is a 591-residue protein sequence, read N- to C-terminus: Probable indole-3-acetic acid-amido synthetase GH3.11 (591 aa).

The protein belongs to the IAA-amido conjugating enzyme family. In terms of tissue distribution, expressed in etiolated and green seedlings, roots, callus and highly in flowers.

Functionally, may catalyze the synthesis of indole-3-acetic acid (IAA)-amino acid conjugates, providing a mechanism for the plant to cope with the presence of excess auxin. The chain is Probable indole-3-acetic acid-amido synthetase GH3.11 (GH3.11) from Oryza sativa subsp. japonica (Rice).